We begin with the raw amino-acid sequence, 226 residues long: UPF0319 protein YPO1442/y2728/YP_1333 (226 aa).

Residues 1 to 20 (MKLGLVAGMLAVCFSFSSVA) form the signal peptide.

It belongs to the UPF0319 family.

This chain is UPF0319 protein YPO1442/y2728/YP_1333, found in Yersinia pestis.